A 270-amino-acid chain; its full sequence is MSDLHNESIFITGGGSGLGLALVERFIEEGAQVATLELSAAKVASLRQRFGEHILAVEGNVTCYADYQRALDQILTRSGKLDCFIGNAGIWDHNASLVNTPAETLETGFHELFNVNVLGYLLSAKACAPALIASEGSMIFTLSNAAWYPGGGGPLYTASKHAATGLIRQLAYELAPKVRVNGVGPCGMASDLRGPQALGQSETSIMQSLTPEKIAAILPLQFFPQPADFTGPYVMLASRRNNRALSGVMINADAGLAIRGIRHVAAGLDL.

Residue 10–34 participates in NAD(+) binding; that stretch reads FITGGGSGLGLALVERFIEEGAQVA. A substrate-binding site is contributed by Ser143. Tyr156 serves as the catalytic Proton acceptor.

Belongs to the short-chain dehydrogenases/reductases (SDR) family.

It catalyses the reaction 3-(cis-5,6-dihydroxycyclohexa-1,3-dien-1-yl)propanoate + NAD(+) = 3-(2,3-dihydroxyphenyl)propanoate + NADH + H(+). The enzyme catalyses (2E)-3-(cis-5,6-dihydroxycyclohexa-1,3-dien-1-yl)prop-2-enoate + NAD(+) = (2E)-3-(2,3-dihydroxyphenyl)prop-2-enoate + NADH + H(+). Its pathway is aromatic compound metabolism; 3-phenylpropanoate degradation. In terms of biological role, converts 3-phenylpropionate-dihydrodiol (PP-dihydrodiol) and cinnamic acid-dihydrodiol (CI-dihydrodiol) into 3-(2,3-dihydroxylphenyl)propanoic acid (DHPP) and 2,3-dihydroxicinnamic acid (DHCI), respectively. This chain is 3-phenylpropionate-dihydrodiol/cinnamic acid-dihydrodiol dehydrogenase, found in Escherichia coli O7:K1 (strain IAI39 / ExPEC).